Here is a 426-residue protein sequence, read N- to C-terminus: Enolase (426 aa).

Position 162 (glutamine 162) interacts with (2R)-2-phosphoglycerate. Glutamate 204 (proton donor) is an active-site residue. Mg(2+) contacts are provided by aspartate 241, glutamate 284, and aspartate 311. The (2R)-2-phosphoglycerate site is built by lysine 336, arginine 365, serine 366, and lysine 387. Residue lysine 336 is the Proton acceptor of the active site.

Belongs to the enolase family. Mg(2+) is required as a cofactor.

It localises to the cytoplasm. The protein localises to the secreted. It is found in the cell surface. It carries out the reaction (2R)-2-phosphoglycerate = phosphoenolpyruvate + H2O. The protein operates within carbohydrate degradation; glycolysis; pyruvate from D-glyceraldehyde 3-phosphate: step 4/5. Functionally, catalyzes the reversible conversion of 2-phosphoglycerate (2-PG) into phosphoenolpyruvate (PEP). It is essential for the degradation of carbohydrates via glycolysis. The protein is Enolase of Acidithiobacillus ferrooxidans (strain ATCC 23270 / DSM 14882 / CIP 104768 / NCIMB 8455) (Ferrobacillus ferrooxidans (strain ATCC 23270)).